The sequence spans 1362 residues: DNA-directed RNA polymerase subunit beta (1362 aa).

This sequence belongs to the RNA polymerase beta chain family. The RNAP catalytic core consists of 2 alpha, 1 beta, 1 beta' and 1 omega subunit. When a sigma factor is associated with the core the holoenzyme is formed, which can initiate transcription.

The enzyme catalyses RNA(n) + a ribonucleoside 5'-triphosphate = RNA(n+1) + diphosphate. Its function is as follows. DNA-dependent RNA polymerase catalyzes the transcription of DNA into RNA using the four ribonucleoside triphosphates as substrates. The polypeptide is DNA-directed RNA polymerase subunit beta (Acidithiobacillus ferrooxidans (strain ATCC 23270 / DSM 14882 / CIP 104768 / NCIMB 8455) (Ferrobacillus ferrooxidans (strain ATCC 23270))).